The sequence spans 469 residues: MEGQGVGRTLRLLRNRLPRLRAGQSQNNPGEAVTEPERIQEHSPSSFAGGQHFFEYLLVVSLKKKRLGDDYEPTITYQFPKRENLLRGQQEEEDRLLSAIPLFCFPDGNEWAPLTEYPRETFSFVLTNVDGSRKIGYCRRLLPAGPGPQLPKVYCIISCIGCFGLFSKILDEVEKRHQISMAVIYPFMQGLREAAFPAPGKTVTLKSFIPDSGTEFISLTRPLDSHLEHVDFSVLLHCLHLEQIIQIFASAVLERKIIFLAEGLSTLSQCIHAAAALLYPFSWAHTYIPVVPESLLATVCCPTPFMVGVQMRFLQEVMDSPMEEVLLVNLCEGTFLLSVGDEKDILPPKLQDDILDSLGQGINELKTSEQINEHVSGPFVQFFVKTVGHYASYIKREASGQGHFQERSFCKAVTSKTKRRFVKKFVKTQLFSLFIQEAEKSRNPPAGYFQKKILEYEEQKKQKKSRERL.

The tract at residues 17–44 (LPRLRAGQSQNNPGEAVTEPERIQEHSP) is disordered. Residues 55–204 (EYLLVVSLKK…AFPAPGKTVT (150 aa)) form the uDENN domain. Positions 226-359 (HLEHVDFSVL…LQDDILDSLG (134 aa)) constitute a cDENN domain. The dDENN domain maps to 361–445 (GINELKTSEQ…QEAEKSRNPP (85 aa)).

It localises to the cytoplasm. Guanine nucleotide exchange factor (GEF) which may activate RAB9A and RAB9B. Promotes the exchange of GDP to GTP, converting inactive GDP-bound Rab proteins into their active GTP-bound form. In Mus musculus (Mouse), this protein is DENN domain-containing protein 2D (Dennd2d).